Consider the following 119-residue polypeptide: Large ribosomal subunit protein uL18 (119 aa).

It belongs to the universal ribosomal protein uL18 family. Part of the 50S ribosomal subunit; part of the 5S rRNA/L5/L18/L25 subcomplex. Contacts the 5S and 23S rRNAs.

This is one of the proteins that bind and probably mediate the attachment of the 5S RNA into the large ribosomal subunit, where it forms part of the central protuberance. The protein is Large ribosomal subunit protein uL18 of Nitratidesulfovibrio vulgaris (strain DP4) (Desulfovibrio vulgaris).